Reading from the N-terminus, the 377-residue chain is Probable O-methyltransferase 3 (377 aa).

An S-adenosyl-L-methionine-binding site is contributed by aspartate 241. The Proton acceptor role is filled by histidine 279.

This sequence belongs to the class I-like SAM-binding methyltransferase superfamily. Cation-independent O-methyltransferase family. Highly expressed in lupulin glands. Detected in early-, mid- and late-stage cones.

The sequence is that of Probable O-methyltransferase 3 from Humulus lupulus (European hop).